A 314-amino-acid polypeptide reads, in one-letter code: Jacalin-related lectin 9 (314 aa).

The N-terminal stretch at methionine 1–alanine 23 is a signal peptide. 2 consecutive Jacalin-type lectin domains span residues glutamine 24–lysine 165 and proline 168–proline 313.

It belongs to the jacalin lectin family.

This chain is Jacalin-related lectin 9 (JAL9), found in Arabidopsis thaliana (Mouse-ear cress).